The sequence spans 92 residues: Small ribosomal subunit protein uS19 (92 aa).

This sequence belongs to the universal ribosomal protein uS19 family.

Functionally, protein S19 forms a complex with S13 that binds strongly to the 16S ribosomal RNA. The protein is Small ribosomal subunit protein uS19 of Jannaschia sp. (strain CCS1).